The chain runs to 150 residues: General odorant-binding protein 19d (150 aa).

An N-terminal signal peptide occupies residues 1 to 23; that stretch reads MSHLVHLTVLLLVGILCLGATSA. Intrachain disulfides connect Cys-41–Cys-72, Cys-68–Cys-126, and Cys-116–Cys-135.

This sequence belongs to the PBP/GOBP family. Expressed in the antenna, mostly on the anterior surface of the third antennal segment. Also detected in the maxillary palps and in cells at the bases of the taste hairs on the proboscis and internal taste organs of the head.

It is found in the secreted. The chain is General odorant-binding protein 19d (Obp19d) from Drosophila melanogaster (Fruit fly).